We begin with the raw amino-acid sequence, 57 residues long: UPF0391 membrane protein BRADO2787 (57 aa).

The next 2 helical transmembrane spans lie at 6 to 26 (WALLFFVISVVAGILGFTGVS) and 35 to 55 (ILFYIFLVIFLVLLILGLTIF).

Belongs to the UPF0391 family.

It is found in the cell membrane. The polypeptide is UPF0391 membrane protein BRADO2787 (Bradyrhizobium sp. (strain ORS 278)).